A 610-amino-acid polypeptide reads, in one-letter code: UvrABC system protein C (610 aa).

The region spanning 16–94 (SQPGVYRMYD…IKLYQPRYNV (79 aa)) is the GIY-YIG domain. One can recognise a UVR domain in the interval 204-239 (DQVLTQLIARMEKASQDLAFEEAARIRDQIQAVRRV).

This sequence belongs to the UvrC family. In terms of assembly, interacts with UvrB in an incision complex.

It localises to the cytoplasm. The UvrABC repair system catalyzes the recognition and processing of DNA lesions. UvrC both incises the 5' and 3' sides of the lesion. The N-terminal half is responsible for the 3' incision and the C-terminal half is responsible for the 5' incision. In Salmonella agona (strain SL483), this protein is UvrABC system protein C.